A 309-amino-acid chain; its full sequence is Polyprenal reductase (309 aa).

The Cytoplasmic segment spans residues 1-3; that stretch reads MFH. A helical transmembrane segment spans residues 4–24; the sequence is ILSIVNIIWLLLALCFGAAFC. Topologically, residues 25-67 are lumenal; sequence LNKFSVKLPNRVEHVFQDFIRYGKTKENIKRASWQLVFDLSKR. Residues 68 to 88 traverse the membrane as a helical segment; that stretch reads YFYHFYVVSVMWNGLLLLFSI. Residues 89-114 are Cytoplasmic-facing; sequence RSVVMSEAFPDWIIDVLGSLTGRSRG. Residues 115 to 135 traverse the membrane as a helical segment; sequence AWNEIHLSTLLLQVLLWVHTL. The Lumenal portion of the chain corresponds to 136–150; that stretch reads RRLLECLFVSVFSDG. A helical membrane pass occupies residues 151–171; sequence VINVVQYAFGLSYYIILGLTV. Residues 172-185 lie on the Cytoplasmic side of the membrane; it reads LCTNDSLPQSESVS. The chain crosses the membrane as a helical span at residues 186–206; the sequence is FFNQLTWYHVVGTLLFFWASF. Residues 207 to 255 lie on the Lumenal side of the membrane; it reads LQHQSLSLLAKMRTDSSGKVETLAHKMPCGGWFELVSCPHYLAELLIYA. The helical transmembrane segment at 256–276 threads the bilayer; it reads AMCVCCGCASLTWWMVVLYVL. Residues 277-309 are Cytoplasmic-facing; it reads CNQALAAQLCHEYYRSKFKTYPHHRKAFIPFVL.

This sequence belongs to the steroid 5-alpha reductase family. Polyprenal reductase subfamily.

Its subcellular location is the endoplasmic reticulum membrane. The catalysed reaction is a di-trans,poly-cis-dolichal + NADP(+) = a di-trans,poly-cis-polyprenal + NADPH + H(+). The enzyme catalyses a 3-oxo-5alpha-steroid + NADP(+) = a 3-oxo-Delta(4)-steroid + NADPH + H(+). It catalyses the reaction androst-4-ene-3,17-dione + NADPH + H(+) = 5alpha-androstan-3,17-dione + NADP(+). It carries out the reaction 17beta-hydroxy-5alpha-androstan-3-one + NADP(+) = testosterone + NADPH + H(+). The protein operates within protein modification; protein glycosylation. Plays a key role in early steps of protein N-linked glycosylation by being involved in the conversion of polyprenol into dolichol. Acts as a polyprenal reductase that mediates the reduction of polyprenal into dolichal in a NADP-dependent mechanism. Dolichols are required for the synthesis of dolichol-linked monosaccharides and the oligosaccharide precursor used for N-glycosylation. Also able to convert testosterone (T) into 5-alpha-dihydrotestosterone (DHT). In Danio rerio (Zebrafish), this protein is Polyprenal reductase (srd5a3).